The chain runs to 687 residues: Complement C1s subcomponent (687 aa).

The first 15 residues, 1 to 15 (MWCIVLLSLLAWVDA), serve as a signal peptide directing secretion. A CUB 1 domain is found at 16–130 (EPTMYGEILS…TGFAAYYVAV (115 aa)). Residues Glu60, Asp68, Asp113, Asp131, Val132, and Glu134 each coordinate Ca(2+). An intrachain disulfide couples Cys65 to Cys83. Residues 131-172 (DVNECTDFADSPCSHFCNNYIGGYFCSCPPEYFLHEDKKNCG) form the EGF-like; calcium-binding domain. Cystine bridges form between Cys135-Cys147, Cys143-Cys156, and Cys158-Cys171. Ca(2+)-binding residues include Asn149, Tyr150, and Gly153. Asn149 carries the (3R)-3-hydroxyasparagine modification. Residue Asn174 is glycosylated (N-linked (GlcNAc...) asparagine). Cystine bridges form between Cys175/Cys202, Cys234/Cys251, Cys294/Cys341, Cys321/Cys354, Cys359/Cys403, Cys386/Cys421, Cys425/Cys548, Cys594/Cys617, and Cys626/Cys658. Residues 175–290 (CSGDVFTTLI…KGWKFRYHGD (116 aa)) enclose the CUB 2 domain. 2 Sushi domains span residues 292–356 (IPCP…RCQP) and 357–423 (VDCG…KCVP). N-linked (GlcNAc...) asparagine glycosylation is present at Asn406. A Peptidase S1 domain is found at 438–679 (IFGGIITKIE…YIDWIRETMQ (242 aa)). Active-site charge relay system residues include His475 and Asp528. Ser630 serves as the catalytic Charge relay system.

This sequence belongs to the peptidase S1 family. As to quaternary structure, C1 is a calcium-dependent trimolecular complex of C1q, C1r and C1s in the molar ration of 1:2:2. Activated C1s is an disulfide-linked heterodimer of a heavy chain and a light chain. The iron and 2-oxoglutarate dependent 3-hydroxylation of aspartate and asparagine is (R) stereospecific within EGF domains.

It catalyses the reaction Cleavage of Arg-|-Ala bond in complement component C4 to form C4a and C4b, and Lys(or Arg)-|-Lys bond in complement component C2 to form C2a and C2b: the 'classical' pathway C3 convertase.. Its activity is regulated as follows. Inhibited by SERPING1. Its function is as follows. C1s B chain is a serine protease that combines with C1q and C1r to form C1, the first component of the classical pathway of the complement system. C1r activates C1s so that it can, in turn, activate C2 and C4. Also cleaves IGFBP5 and thereby inhibits the trophic effects of IGF1. The protein is Complement C1s subcomponent of Sus scrofa (Pig).